We begin with the raw amino-acid sequence, 277 residues long: Large ribosomal subunit protein uL2 (277 aa).

Residues 222 to 277 (GSVMNPNDHPHGGGEGKAPVGRKAPSTPWGKPALGLKTRNKKAKSDKLIVRRRNEK) are disordered. Residues 264–277 (AKSDKLIVRRRNEK) show a composition bias toward basic and acidic residues.

This sequence belongs to the universal ribosomal protein uL2 family. Part of the 50S ribosomal subunit. Forms a bridge to the 30S subunit in the 70S ribosome.

In terms of biological role, one of the primary rRNA binding proteins. Required for association of the 30S and 50S subunits to form the 70S ribosome, for tRNA binding and peptide bond formation. It has been suggested to have peptidyltransferase activity; this is somewhat controversial. Makes several contacts with the 16S rRNA in the 70S ribosome. The sequence is that of Large ribosomal subunit protein uL2 from Streptococcus thermophilus (strain CNRZ 1066).